A 474-amino-acid polypeptide reads, in one-letter code: Receptor-transporting protein 3 (474 aa).

Topologically, residues 1 to 453 are cytoplasmic; sequence MMEEDIGDTE…SCCEAACNCM (453 aa). The segment at 53–164 adopts a 3CxxC-type zinc-finger fold; sequence TFARFHCPSC…SSNCEACLLG (112 aa). Residues 175–304 are disordered; sequence SKPPAPPLSP…ISCTSKPSTT (130 aa). 2 stretches are compositionally biased toward polar residues: residues 197–228 and 259–304; these read VTCS…NPTK and VTCS…PSTT. The chain crosses the membrane as a helical span at residues 454–474; sequence SQSPLCCLAFLILFLLLWYLL.

It belongs to the TMEM7 family. In terms of assembly, interacts with TAS2R16. As to expression, expressed predominantly in the liver. Not detected in the olfactory epithelium.

Its subcellular location is the membrane. Functionally, promotes functional cell surface expression of the bitter taste receptors TAS2R16 and TAS2R43. The sequence is that of Receptor-transporting protein 3 (Rtp3) from Mus musculus (Mouse).